A 217-amino-acid polypeptide reads, in one-letter code: FMN-dependent NADH:quinone oxidoreductase (217 aa).

FMN-binding positions include S10 and 16–18 (SVS).

Belongs to the azoreductase type 1 family. Homodimer. FMN is required as a cofactor.

The catalysed reaction is 2 a quinone + NADH + H(+) = 2 a 1,4-benzosemiquinone + NAD(+). The enzyme catalyses N,N-dimethyl-1,4-phenylenediamine + anthranilate + 2 NAD(+) = 2-(4-dimethylaminophenyl)diazenylbenzoate + 2 NADH + 2 H(+). Functionally, quinone reductase that provides resistance to thiol-specific stress caused by electrophilic quinones. In terms of biological role, also exhibits azoreductase activity. Catalyzes the reductive cleavage of the azo bond in aromatic azo compounds to the corresponding amines. The sequence is that of FMN-dependent NADH:quinone oxidoreductase from Polaromonas naphthalenivorans (strain CJ2).